Reading from the N-terminus, the 162-residue chain is uncharacterized protein (162 aa).

The next 4 membrane-spanning stretches (helical) occupy residues 15–35, 43–63, 70–90, and 97–117; these read VLAI…APAL, VCHF…FDLS, LTIL…QSFL, and LFDI…NILY.

The protein localises to the membrane. This is an uncharacterized protein from Schizosaccharomyces pombe (strain 972 / ATCC 24843) (Fission yeast).